A 487-amino-acid polypeptide reads, in one-letter code: Schwannomin-interacting protein 1 (487 aa).

Disordered stretches follow at residues 1–74 (MERS…VSAL), 88–221 (VIDE…PVPP), 236–260 (FREQ…NERE), and 308–354 (SGSD…SLDD). Over residues 14 to 27 (DQGKHSDSDYREDG) the composition is skewed to basic and acidic residues. A compositionally biased stretch (low complexity) spans 32-67 (SDAGSSSSSSRASSQSNSTKVTPCSECKSSSSPGGS). Acidic residues predominate over residues 92-106 (WAPEEDGEEEEEEDE). Composition is skewed to basic and acidic residues over residues 107-123 (RDQR…REPG) and 153-162 (HQHDPQDLRH). Serine 117 is subject to Phosphoserine. A compositionally biased stretch (polar residues) spans 242–255 (RNQGQARTNSTSAQ). Residues 309 to 323 (GSDKDSDADDSKTET) show a composition bias toward basic and acidic residues. Positions 324–335 (SLDTPLSPMSKQ) are enriched in polar residues. A compositionally biased stretch (acidic residues) spans 344–354 (TTEEESESLDD). The stretch at 424–458 (IGQLQVIVNDLHSQIESLNEELVQLLLIRDELHTE) forms a coiled coil.

The protein belongs to the SCHIP1 family. As to quaternary structure, homooligomer (via coiled coil domain). Interacts with NF2; the interaction is direct. Interacts with ANK3. As to expression, preferentially expressed in brain, skeletal muscles and heart. Also expressed in detected in pancreas, kidney, liver, lung, and placenta.

It localises to the cytoplasm. This is Schwannomin-interacting protein 1 from Homo sapiens (Human).